The sequence spans 94 residues: Pyrimidine/purine nucleoside phosphorylase (94 aa).

It belongs to the nucleoside phosphorylase PpnP family.

The enzyme catalyses a purine D-ribonucleoside + phosphate = a purine nucleobase + alpha-D-ribose 1-phosphate. It carries out the reaction adenosine + phosphate = alpha-D-ribose 1-phosphate + adenine. It catalyses the reaction cytidine + phosphate = cytosine + alpha-D-ribose 1-phosphate. The catalysed reaction is guanosine + phosphate = alpha-D-ribose 1-phosphate + guanine. The enzyme catalyses inosine + phosphate = alpha-D-ribose 1-phosphate + hypoxanthine. It carries out the reaction thymidine + phosphate = 2-deoxy-alpha-D-ribose 1-phosphate + thymine. It catalyses the reaction uridine + phosphate = alpha-D-ribose 1-phosphate + uracil. The catalysed reaction is xanthosine + phosphate = alpha-D-ribose 1-phosphate + xanthine. Its function is as follows. Catalyzes the phosphorolysis of diverse nucleosides, yielding D-ribose 1-phosphate and the respective free bases. Can use uridine, adenosine, guanosine, cytidine, thymidine, inosine and xanthosine as substrates. Also catalyzes the reverse reactions. The chain is Pyrimidine/purine nucleoside phosphorylase from Vibrio parahaemolyticus serotype O3:K6 (strain RIMD 2210633).